A 601-amino-acid polypeptide reads, in one-letter code: Polypeptide N-acetylgalactosaminyltransferase 11 (601 aa).

The Cytoplasmic portion of the chain corresponds to 1 to 7 (MGSAALR). The helical; Signal-anchor for type II membrane protein transmembrane segment at 8-28 (CFCYGCLFTSVTWTLLLFIYF) threads the bilayer. Residues N29 and N202 are each glycosylated (N-linked (GlcNAc...) asparagine). Residues 29–601 (NFSEESQGFR…SPSQQWHLEN (573 aa)) are Lumenal-facing. Residues 143 to 254 (LPMASIVICF…EMWLQPLLAP (112 aa)) are catalytic subdomain A. The catalytic subdomain B stretch occupies residues 312-374 (PFRSPTMAGG…PCSRVGHIFR (63 aa)). The Ricin B-type lectin domain occupies 469–600 (RPKILQRGRL…GSPSQQWHLE (132 aa)). C486 and C505 are joined by a disulfide. An N-linked (GlcNAc...) asparagine glycan is attached at N508. 2 disulfide bridges follow: C529/C546 and C571/C589.

It belongs to the glycosyltransferase 2 family. GalNAc-T subfamily. Interacts with notch1. Requires Mn(2+) as cofactor. It depends on Ca(2+) as a cofactor.

It is found in the golgi apparatus membrane. It carries out the reaction L-seryl-[protein] + UDP-N-acetyl-alpha-D-galactosamine = a 3-O-[N-acetyl-alpha-D-galactosaminyl]-L-seryl-[protein] + UDP + H(+). The enzyme catalyses L-threonyl-[protein] + UDP-N-acetyl-alpha-D-galactosamine = a 3-O-[N-acetyl-alpha-D-galactosaminyl]-L-threonyl-[protein] + UDP + H(+). It participates in protein modification; protein glycosylation. Its function is as follows. Polypeptide N-acetylgalactosaminyltransferase that catalyzes the initiation of protein O-linked glycosylation and is involved in left/right asymmetry by mediating O-glycosylation of NOTCH1. O-glycosylation of NOTCH1 promotes activation of NOTCH1, modulating the balance between motile and immotile (sensory) cilia at the left-right organiser (LRO). Polypeptide N-acetylgalactosaminyltransferases catalyze the transfer of an N-acetyl-D-galactosamine residue to a serine or threonine residue on the protein receptor. This is Polypeptide N-acetylgalactosaminyltransferase 11 (galnt11) from Xenopus tropicalis (Western clawed frog).